A 254-amino-acid polypeptide reads, in one-letter code: UPF0246 protein Fphi_1075 (254 aa).

Belongs to the UPF0246 family.

The chain is UPF0246 protein Fphi_1075 from Francisella philomiragia subsp. philomiragia (strain ATCC 25017 / CCUG 19701 / FSC 153 / O#319-036).